The following is a 437-amino-acid chain: MKITMIGAGYVGLVSGVCFADFGHDVVCVDKDEGKISALKKGQIPIFEPGLDHLVASNVASGRLNFTDDLKTAVAASDVVFIAVGTPSRRGDGHADLSYVYAAAREIAANLQGFTVVVTKSTVPVGTGDEVERIIRETNPAADVTVVSNPEFLREGAAIEDFKRPDRIVIGVDGSDGRAREVMTEVYRPLYLNQSPLVFTTRRTSELIKYAGNAFLAMKITFINEIADLCEKVGANVQDVARGIGLDGRIGSKFLHAGPGYGGSCFPKDTLALVKTAQDHDTPVRLVETTVAVNDNRKRAMGRKVIAAAGGDIRGSKIAVLGLTFKPNTDDMRDSPAIAVVQALQDAGARVTGYDPEGMENARKLIEGLDCARDPYEAAAEADALVIITEWNEFRALDFDRLKSTMKTPLLVDLRNIYRKDEVAKHGFRYASIGRPD.

The NAD(+) site is built by Val-11, Asp-30, Lys-35, Thr-86, Thr-122, and Glu-155. Residues 151-155, Lys-209, Asn-213, 254-258, and Gly-262 each bind substrate; these read EFLRE and FLHAG. The active-site Nucleophile is Cys-265. Lys-268 contacts NAD(+). Residue Lys-326 participates in substrate binding. Arg-333 contacts NAD(+).

This sequence belongs to the UDP-glucose/GDP-mannose dehydrogenase family.

It catalyses the reaction UDP-alpha-D-glucose + 2 NAD(+) + H2O = UDP-alpha-D-glucuronate + 2 NADH + 3 H(+). It participates in nucleotide-sugar biosynthesis; UDP-alpha-D-glucuronate biosynthesis; UDP-alpha-D-glucuronate from UDP-alpha-D-glucose: step 1/1. Its pathway is capsule biogenesis; capsule polysaccharide biosynthesis. The protein is UDP-glucose 6-dehydrogenase of Rhizobium meliloti (strain 1021) (Ensifer meliloti).